The following is a 262-amino-acid chain: Phosphonates import ATP-binding protein PhnC (262 aa).

Positions 5-253 (IRVEKLAKTF…RFDHLYRSIN (249 aa)) constitute an ABC transporter domain. 37 to 44 (GPSGSGKS) serves as a coordination point for ATP.

This sequence belongs to the ABC transporter superfamily. Phosphonates importer (TC 3.A.1.9.1) family. The complex is composed of two ATP-binding proteins (PhnC), two transmembrane proteins (PhnE) and a solute-binding protein (PhnD).

It is found in the cell inner membrane. It carries out the reaction phosphonate(out) + ATP + H2O = phosphonate(in) + ADP + phosphate + H(+). Part of the ABC transporter complex PhnCDE involved in phosphonates import. Responsible for energy coupling to the transport system. The polypeptide is Phosphonates import ATP-binding protein PhnC (Shigella dysenteriae serotype 1 (strain Sd197)).